Reading from the N-terminus, the 451-residue chain is Exodeoxyribonuclease 7 large subunit (451 aa).

The protein belongs to the XseA family. In terms of assembly, heterooligomer composed of large and small subunits.

It localises to the cytoplasm. It catalyses the reaction Exonucleolytic cleavage in either 5'- to 3'- or 3'- to 5'-direction to yield nucleoside 5'-phosphates.. Bidirectionally degrades single-stranded DNA into large acid-insoluble oligonucleotides, which are then degraded further into small acid-soluble oligonucleotides. This chain is Exodeoxyribonuclease 7 large subunit, found in Neisseria meningitidis serogroup A / serotype 4A (strain DSM 15465 / Z2491).